Reading from the N-terminus, the 281-residue chain is MRLIESIREMTAWSREQAREGRTIGFVPTMGYLHEGHLTLMRRAREACDRVVVSIFVNPLQFGAGEDFAEYPRDLIRDSRLAESAGVDVLFAPSAREMYPKGYHTFVDVERLTEGLCGASRPGHFRGVTTVVCKLFNIVRPDVAYFGQKDAQQLAVIRRMTEDLNLPVSVVGVPIVREADGLAMSSRNVYLSPQERQAALVLSRALARARELIEGGERDVARLRQIITETITAEPLAAIDYVSIVDNRFIQPVETLAGECLIALAVRIGKRRLIDNMVVEV.

Residue 30 to 37 (MGYLHEGH) coordinates ATP. H37 (proton donor) is an active-site residue. Q61 serves as a coordination point for (R)-pantoate. Q61 is a binding site for beta-alanine. 147–150 (GQKD) is an ATP binding site. Residue Q153 participates in (R)-pantoate binding. Residues V176 and 184–187 (MSSR) each bind ATP.

This sequence belongs to the pantothenate synthetase family. Homodimer.

The protein resides in the cytoplasm. The enzyme catalyses (R)-pantoate + beta-alanine + ATP = (R)-pantothenate + AMP + diphosphate + H(+). It functions in the pathway cofactor biosynthesis; (R)-pantothenate biosynthesis; (R)-pantothenate from (R)-pantoate and beta-alanine: step 1/1. In terms of biological role, catalyzes the condensation of pantoate with beta-alanine in an ATP-dependent reaction via a pantoyl-adenylate intermediate. The protein is Pantothenate synthetase of Heliobacterium modesticaldum (strain ATCC 51547 / Ice1).